A 244-amino-acid polypeptide reads, in one-letter code: Phosphoadenosine 5'-phosphosulfate reductase (244 aa).

Catalysis depends on Cys-239, which acts as the Nucleophile; cysteine thiosulfonate intermediate.

This sequence belongs to the PAPS reductase family. CysH subfamily.

It is found in the cytoplasm. It carries out the reaction [thioredoxin]-disulfide + sulfite + adenosine 3',5'-bisphosphate + 2 H(+) = [thioredoxin]-dithiol + 3'-phosphoadenylyl sulfate. It functions in the pathway sulfur metabolism; hydrogen sulfide biosynthesis; sulfite from sulfate: step 3/3. Its function is as follows. Catalyzes the formation of sulfite from phosphoadenosine 5'-phosphosulfate (PAPS) using thioredoxin as an electron donor. This is Phosphoadenosine 5'-phosphosulfate reductase from Buchnera aphidicola subsp. Acyrthosiphon pisum (strain 5A).